The following is a 245-amino-acid chain: 14-3-3 protein zeta (245 aa).

This sequence belongs to the 14-3-3 family. In terms of assembly, homodimer.

It localises to the cytoplasm. Functionally, adapter protein implicated in the regulation of a large spectrum of both general and specialized signaling pathways. Binds to a large number of partners, usually by recognition of a phosphoserine or phosphothreonine motif. Binding generally results in the modulation of the activity of the binding partner. This chain is 14-3-3 protein zeta (ywhaz), found in Xenopus tropicalis (Western clawed frog).